Here is a 247-residue protein sequence, read N- to C-terminus: 5-oxoprolinase subunit A (247 aa).

Belongs to the LamB/PxpA family. Forms a complex composed of PxpA, PxpB and PxpC.

It carries out the reaction 5-oxo-L-proline + ATP + 2 H2O = L-glutamate + ADP + phosphate + H(+). Its function is as follows. Catalyzes the cleavage of 5-oxoproline to form L-glutamate coupled to the hydrolysis of ATP to ADP and inorganic phosphate. The polypeptide is 5-oxoprolinase subunit A (Histophilus somni (strain 129Pt) (Haemophilus somnus)).